The chain runs to 132 residues: MAMSDPIADFLTRIRNAGMVYHDKVEVPASNVKKAIAEILKEEGFIKDVEYISDNKQGVIRCYLKYGQNRERVITGLKRISRPGLRVYAKKDEVPKVLGGLGVAILSTSKGLMTDKRARQEGLGGEVLCYIW.

Belongs to the universal ribosomal protein uS8 family. Part of the 30S ribosomal subunit. Contacts proteins S5 and S12.

Its function is as follows. One of the primary rRNA binding proteins, it binds directly to 16S rRNA central domain where it helps coordinate assembly of the platform of the 30S subunit. In Desulfitobacterium hafniense (strain DSM 10664 / DCB-2), this protein is Small ribosomal subunit protein uS8.